The following is a 196-amino-acid chain: Large ribosomal subunit protein bL25 (196 aa).

The protein belongs to the bacterial ribosomal protein bL25 family. CTC subfamily. Part of the 50S ribosomal subunit; part of the 5S rRNA/L5/L18/L25 subcomplex. Contacts the 5S rRNA. Binds to the 5S rRNA independently of L5 and L18.

Functionally, this is one of the proteins that binds to the 5S RNA in the ribosome where it forms part of the central protuberance. This Bacteroides fragilis (strain ATCC 25285 / DSM 2151 / CCUG 4856 / JCM 11019 / LMG 10263 / NCTC 9343 / Onslow / VPI 2553 / EN-2) protein is Large ribosomal subunit protein bL25.